Consider the following 145-residue polypeptide: Large ribosomal subunit protein uL16 (145 aa).

The protein belongs to the universal ribosomal protein uL16 family. Part of the 50S ribosomal subunit.

In terms of biological role, binds 23S rRNA and is also seen to make contacts with the A and possibly P site tRNAs. This chain is Large ribosomal subunit protein uL16, found in Agathobacter rectalis (strain ATCC 33656 / DSM 3377 / JCM 17463 / KCTC 5835 / VPI 0990) (Eubacterium rectale).